The chain runs to 270 residues: MAASSSGEKEKERLGGGLGVAGGNSTRERLLSALEDLEVLSRELIEMLAISRNQKLLQAGEENQVLELLIHRDGEFQELMKLALNQGKIHHEMQVLEKEVEKRDSDIQQLQKQLKEAEQILATAVYQAKEKLKSIEKARKGAISSEEIIKYAHRISASNAVCAPLTWVPGDPRRPYPTDLEMRSGLLGQMNNPSTNGVNGHLPGDALAAGRLPDVLAPQYPWQSNDMSMNMLPPNHSSDFLLEPPGHNKENEDDVEIMSTDSSSSSSESD.

A disordered region spans residues 1-22; the sequence is MAASSSGEKEKERLGGGLGVAG. Residue Ala-2 is modified to N-acetylalanine. Coiled-coil stretches lie at residues 24–48 and 90–131; these read NSTR…IEML and HHEM…AKEK. At Ser-32 the chain carries Phosphoserine. Positions 226–270 are disordered; it reads DMSMNMLPPNHSSDFLLEPPGHNKENEDDVEIMSTDSSSSSSESD. Positions 259–270 are enriched in low complexity; the sequence is STDSSSSSSESD.

This sequence belongs to the Mediator complex subunit 4 family. As to quaternary structure, component of the Mediator complex, which is composed of MED1, MED4, MED6, MED7, MED8, MED9, MED10, MED11, MED12, MED13, MED13L, MED14, MED15, MED16, MED17, MED18, MED19, MED20, MED21, MED22, MED23, MED24, MED25, MED26, MED27, MED29, MED30, MED31, CCNC, CDK8 and CDC2L6/CDK11. The MED12, MED13, CCNC and CDK8 subunits form a distinct module termed the CDK8 module. Mediator containing the CDK8 module is less active than Mediator lacking this module in supporting transcriptional activation. Individual preparations of the Mediator complex lacking one or more distinct subunits have been variously termed ARC, CRSP, DRIP, PC2, SMCC and TRAP.

The protein localises to the nucleus. Component of the Mediator complex, a coactivator involved in the regulated transcription of nearly all RNA polymerase II-dependent genes. Mediator functions as a bridge to convey information from gene-specific regulatory proteins to the basal RNA polymerase II transcription machinery. Mediator is recruited to promoters by direct interactions with regulatory proteins and serves as a scaffold for the assembly of a functional preinitiation complex with RNA polymerase II and the general transcription factors. The protein is Mediator of RNA polymerase II transcription subunit 4 (MED4) of Homo sapiens (Human).